The sequence spans 369 residues: Type 2 DNA topoisomerase 6 subunit A (369 aa).

The 139-residue stretch at 11 to 149 folds into the Topo IIA-type catalytic domain; that stretch reads QRDLLAREKL…FHMRPEEDGA (139 aa). Y106 acts as the O-(5'-phospho-DNA)-tyrosine intermediate in catalysis. Mg(2+) is bound by residues E202 and D254.

The protein belongs to the TOP6A family. Homodimer. Heterotetramer of two Top6A and two Top6B chains. Mg(2+) serves as cofactor.

It catalyses the reaction ATP-dependent breakage, passage and rejoining of double-stranded DNA.. Functionally, relaxes both positive and negative superturns and exhibits a strong decatenase activity. This is Type 2 DNA topoisomerase 6 subunit A from Methanosarcina barkeri (strain Fusaro / DSM 804).